The following is a 235-amino-acid chain: Peptidase E (235 aa).

Active-site charge relay system residues include S122, D137, and H159.

It belongs to the peptidase S51 family.

The protein localises to the cytoplasm. The catalysed reaction is Dipeptidase E catalyzes the hydrolysis of dipeptides Asp-|-Xaa. It does not act on peptides with N-terminal Glu, Asn or Gln, nor does it cleave isoaspartyl peptides.. Functionally, hydrolyzes dipeptides containing N-terminal aspartate residues. May play a role in allowing the cell to use peptide aspartate to spare carbon otherwise required for the synthesis of the aspartate family of amino acids. The protein is Peptidase E of Shewanella amazonensis (strain ATCC BAA-1098 / SB2B).